A 110-amino-acid polypeptide reads, in one-letter code: QKCATIVMVTNLLEAKKLKCHQYWPGEDTNEGETEKYGYFLVTLTDVKTRNFFVTRTFNFNNSTTLPSIIRQLHYTAWPDFGVPKNPHELLLFRRRVIAANPPHSGPIVV.

Residues 1–110 enclose the Tyrosine-protein phosphatase domain; it reads QKCATIVMVT…NPPHSGPIVV (110 aa). D80 provides a ligand contact to substrate.

The protein belongs to the protein-tyrosine phosphatase family.

It carries out the reaction O-phospho-L-tyrosyl-[protein] + H2O = L-tyrosyl-[protein] + phosphate. The protein is Tyrosine-protein phosphatase 3 (STY-3) of Styela plicata (Wrinkled sea squirt).